A 122-amino-acid chain; its full sequence is MVTTKAVGDGGEDRALAYLLRAGLKLVERNYRVAGGPRVRGGEIDLVLRDRDGTLVFVEVRTRATRSHGGAAATVSGVKQQRIVRAARHYLMRFASPPPCRFDVVAIEGEHIAWLRAAFDAS.

Belongs to the UPF0102 family.

The chain is UPF0102 protein Mpe_A3766 from Methylibium petroleiphilum (strain ATCC BAA-1232 / LMG 22953 / PM1).